Reading from the N-terminus, the 312-residue chain is tRNA uridine(34) hydroxylase (312 aa).

A Rhodanese domain is found at 123 to 217 (SDPEVLLIDT…YLEEVPQEQS (95 aa)). The active-site Cysteine persulfide intermediate is the C177. A compositionally biased stretch (basic and acidic residues) spans 282–293 (ARERQKQIELAR). A disordered region spans residues 282-312 (ARERQKQIELARQRNQPHPLGRDPRQSTLEN).

The protein belongs to the TrhO family.

The enzyme catalyses uridine(34) in tRNA + AH2 + O2 = 5-hydroxyuridine(34) in tRNA + A + H2O. Its function is as follows. Catalyzes oxygen-dependent 5-hydroxyuridine (ho5U) modification at position 34 in tRNAs. The chain is tRNA uridine(34) hydroxylase from Pseudomonas paraeruginosa (strain DSM 24068 / PA7) (Pseudomonas aeruginosa (strain PA7)).